Reading from the N-terminus, the 426-residue chain is Enolase (426 aa).

Glutamine 163 contacts (2R)-2-phosphoglycerate. Glutamate 205 functions as the Proton donor in the catalytic mechanism. Mg(2+)-binding residues include aspartate 242, glutamate 283, and aspartate 310. Residues lysine 335, arginine 364, serine 365, and lysine 386 each contribute to the (2R)-2-phosphoglycerate site. The active-site Proton acceptor is lysine 335.

It belongs to the enolase family. Requires Mg(2+) as cofactor.

The protein resides in the cytoplasm. It is found in the secreted. It localises to the cell surface. The enzyme catalyses (2R)-2-phosphoglycerate = phosphoenolpyruvate + H2O. It functions in the pathway carbohydrate degradation; glycolysis; pyruvate from D-glyceraldehyde 3-phosphate: step 4/5. Functionally, catalyzes the reversible conversion of 2-phosphoglycerate (2-PG) into phosphoenolpyruvate (PEP). It is essential for the degradation of carbohydrates via glycolysis. This chain is Enolase, found in Leifsonia xyli subsp. xyli (strain CTCB07).